A 548-amino-acid polypeptide reads, in one-letter code: Membrane protein insertase YidC (548 aa).

Residues 6 to 26 (NLLIIALLFVSFMIWQAWEQD) form a helical membrane-spanning segment. Positions 28-52 (NPQPQQQTTQTTTTAAGSAADQGVP) are disordered. Residues 29-41 (PQPQQQTTQTTTT) are compositionally biased toward low complexity. 4 helical membrane-spanning segments follow: residues 345-365 (KFIH…TFIV), 420-440 (LGGC…YYML), 458-478 (LSAQ…MFFI), and 499-519 (PVIF…YYIV).

This sequence belongs to the OXA1/ALB3/YidC family. Type 1 subfamily. In terms of assembly, interacts with the Sec translocase complex via SecD. Specifically interacts with transmembrane segments of nascent integral membrane proteins during membrane integration.

Its subcellular location is the cell inner membrane. Its function is as follows. Required for the insertion and/or proper folding and/or complex formation of integral membrane proteins into the membrane. Involved in integration of membrane proteins that insert both dependently and independently of the Sec translocase complex, as well as at least some lipoproteins. Aids folding of multispanning membrane proteins. In Klebsiella pneumoniae (strain 342), this protein is Membrane protein insertase YidC.